Here is a 329-residue protein sequence, read N- to C-terminus: Ankyrin repeat and SOCS box protein 5 (329 aa).

ANK repeat units follow at residues 69–98 (ADRSPLHEAASQGRLLALRTLLSQGYNVNA), 102–131 (DHVTPLHEACLGDHVACARTLLQAGANVNA), 135–164 (DGVTPLFNACSQGSTSCTELLLEYGAKPQL), 167–196 (CLPSPTHEAASKGHHECLEILISWGVDVDQ), 200–229 (HLGTPLYVACMSQQFHCVRKLLYAGADVQK), and 232–261 (YWDTPLHAAAQQSCTEIVNLLLEFGADINA). The SOCS box domain occupies 278–329 (LVERLLLQHEATPSSLCQLCRLCIRNYIGRPRLHLIPQLQLPTLLQNFLQYR).

Belongs to the ankyrin SOCS box (ASB) family.

It functions in the pathway protein modification; protein ubiquitination. Functionally, may be a substrate-recognition component of a SCF-like ECS (Elongin-Cullin-SOCS-box protein) E3 ubiquitin-protein ligase complex which mediates the ubiquitination and subsequent proteasomal degradation of target proteins. May play a role in the initiation of arteriogenesis. The protein is Ankyrin repeat and SOCS box protein 5 (ASB5) of Bos taurus (Bovine).